The primary structure comprises 154 residues: U1 small nuclear ribonucleoprotein C (154 aa).

The Matrin-type zinc-finger motif lies at 4–36; sequence YYCDYCDTYLTHDSPSVRKTHCTGRKHKDNVKF.

The protein belongs to the U1 small nuclear ribonucleoprotein C family. In terms of assembly, U1 snRNP is composed of the 7 core Sm proteins B/B', D1, D2, D3, E, F and G that assemble in a heptameric protein ring on the Sm site of the small nuclear RNA to form the core snRNP, and at least 3 U1 snRNP-specific proteins U1-70K, U1-A and U1-C. U1-C interacts with U1 snRNA and the 5' splice-site region of the pre-mRNA.

It localises to the nucleus. Its function is as follows. Component of the spliceosomal U1 snRNP, which is essential for recognition of the pre-mRNA 5' splice-site and the subsequent assembly of the spliceosome. U1-C is directly involved in initial 5' splice-site recognition for both constitutive and regulated alternative splicing. The interaction with the 5' splice-site seems to precede base-pairing between the pre-mRNA and the U1 snRNA. Stimulates commitment or early (E) complex formation by stabilizing the base pairing of the 5' end of the U1 snRNA and the 5' splice-site region. The polypeptide is U1 small nuclear ribonucleoprotein C (Aedes aegypti (Yellowfever mosquito)).